The following is a 1355-amino-acid chain: Collagen alpha-2(I) chain (1355 aa).

An N-terminal signal peptide occupies residues 1-22 (MLSFVDLRSVLLLAVTLYLVTC). Residue Q23 is modified to Pyrrolidone carboxylic acid. Residues 23 to 71 (QEVRRGPRGDKGPPGEQGPPGIPGRDGEDGLPGLPGPPGVPGLGGNFAA) constitute a propeptide, N-terminal propeptide. Over residues 26-35 (RRGPRGDKGP) the composition is skewed to basic and acidic residues. The disordered stretch occupies residues 26–1111 (RRGPRGDKGP…GDGGEYYRAD (1086 aa)). At Q72 the chain carries Pyrrolidone carboxylic acid. K77 is modified (allysine). A compositionally biased stretch (low complexity) spans 99 to 108 (PGSQGFQGLP). Residues 132–146 (AGEDGHPGKSGRPGE) are compositionally biased toward basic and acidic residues. Residue K168 is modified to 5-hydroxylysine; alternate. A glycan (O-linked (Gal...) hydroxylysine; alternate) is linked at K168. Low complexity predominate over residues 218 to 267 (PAGSAGSRGSDGSSGPVGPAGPIGSAGAPGLPGAPGAKGELGPAGNNGPT). Residues 276–290 (PGPPGSLGPAGPPGN) show a composition bias toward pro residues. The segment covering 291–303 (PGTNGVNGAKGTA) has biased composition (low complexity). A compositionally biased stretch (gly residues) spans 304-322 (GLPGVGGAPGLPGGRGIPG). Over residues 327-336 (AGPSGARGLA) the composition is skewed to low complexity. Composition is skewed to gly residues over residues 340 to 349 (GIAGGKGDTG) and 403 to 412 (GRAGGIGPAG). Low complexity-rich tracts occupy residues 413–426 (SRGSSGPPGARGPN) and 465–495 (EGRSGAAGPAGARGEPGAIGFPGPKGPNGEP). Gly residues-rich tracts occupy residues 523–532 (GPAGLGGATG) and 586–595 (GESGGAGPHG). Low complexity predominate over residues 596-618 (PSGSRGPSGAPGPDGQKGEPGAA). The span at 619 to 628 (GLNGGLGPSG) shows a compositional bias: gly residues. Low complexity-rich tracts occupy residues 659–675 (NPGRDGARGPAGAAGAP), 687–701 (SGPAGPSGVAGPRGA), and 708–726 (AGPAGPTGFAGPPGAAGHT). The span at 728 to 738 (AKGDRGAKGPK) shows a compositional bias: basic and acidic residues. 2 stretches are compositionally biased toward low complexity: residues 741 to 767 (AGSPGPLGAHGSAGPAGPNGPAGSTGA) and 776 to 788 (ATGFPGPAGRAGA). A compositionally biased stretch (basic and acidic residues) spans 804–813 (PGKDGSRGPR). Residues 852–869 (AGPSGVLGARGILGLPGT) are compositionally biased toward low complexity. Residues 874–883 (GLPGGPGSNG) are compositionally biased toward gly residues. Low complexity-rich tracts occupy residues 884–912 (EPGPSGLAGSSGPRGPPGSVGSPGPVGHS) and 947–966 (PSGLAGAPGPAGSAGPAGKS). A compositionally biased stretch (gly residues) spans 967–976 (GNRGEGGPSG). Over residues 996-1014 (RGDKGEAGERGARGLDGRK) the composition is skewed to basic and acidic residues. Low complexity predominate over residues 1019-1041 (LSGLPGPSGTPGETGPSGSVGPV). The segment covering 1080 to 1091 (AGPPGPPGPPGH) has biased composition (pro residues). A compositionally biased stretch (gly residues) spans 1093-1105 (GPSGGGYDGGDGG). A propeptide spans 1111 to 1355 (DQPERKPKDY…GFEIGPVCFK (245 aa)) (C-terminal propeptide). The Fibrillar collagen NC1 domain occupies 1120–1355 (YEVDATLKSL…GFEIGPVCFK (236 aa)). Cystine bridges form between C1150-C1182, C1190-C1353, and C1261-C1306. D1168, N1170, Q1171, C1173, and D1176 together coordinate Ca(2+). Residues N1206 and N1256 are each glycosylated (N-linked (GlcNAc...) asparagine).

It belongs to the fibrillar collagen family. In terms of assembly, trimers of one alpha 2(I) and two alpha 1(I) chains. Prolines at the third position of the tripeptide repeating unit (G-X-Y) are hydroxylated in some or all of the chains. Forms the fibrils of tendon, ligaments and bones. In bones the fibrils are mineralized with calcium hydroxyapatite.

The protein resides in the secreted. It localises to the extracellular space. It is found in the extracellular matrix. Type I collagen is a member of group I collagen (fibrillar forming collagen). The protein is Collagen alpha-2(I) chain (COL1A2) of Aquarana catesbeiana (American bullfrog).